A 240-amino-acid chain; its full sequence is 2,3,4,5-tetrahydropyridine-2,6-dicarboxylate N-acetyltransferase (240 aa).

The protein belongs to the transferase hexapeptide repeat family. DapH subfamily.

The catalysed reaction is (S)-2,3,4,5-tetrahydrodipicolinate + acetyl-CoA + H2O = L-2-acetamido-6-oxoheptanedioate + CoA. Its pathway is amino-acid biosynthesis; L-lysine biosynthesis via DAP pathway; LL-2,6-diaminopimelate from (S)-tetrahydrodipicolinate (acetylase route): step 1/3. Its function is as follows. Catalyzes the transfer of an acetyl group from acetyl-CoA to tetrahydrodipicolinate. This chain is 2,3,4,5-tetrahydropyridine-2,6-dicarboxylate N-acetyltransferase, found in Staphylococcus epidermidis (strain ATCC 35984 / DSM 28319 / BCRC 17069 / CCUG 31568 / BM 3577 / RP62A).